Reading from the N-terminus, the 188-residue chain is Translocon-associated protein subunit beta (188 aa).

An N-terminal signal peptide occupies residues Met1–Cys15. Residues Val16 to Tyr151 are Lumenal-facing. 2 N-linked (GlcNAc...) asparagine glycosylation sites follow: Asn93 and Asn109. The helical transmembrane segment at Thr152–Phe172 threads the bilayer. At Gln173–Thr188 the chain is on the cytoplasmic side.

This sequence belongs to the TRAP-beta family. In terms of assembly, heterotetramer of TRAP-alpha, TRAP-beta, TRAP-delta and TRAP-gamma.

It localises to the endoplasmic reticulum membrane. In terms of biological role, TRAP proteins are part of a complex whose function is to bind calcium to the ER membrane and thereby regulate the retention of ER resident proteins. The chain is Translocon-associated protein subunit beta from Caenorhabditis elegans.